The primary structure comprises 95 residues: Putative septation protein SpoVG (95 aa).

The protein belongs to the SpoVG family.

Could be involved in septation. The sequence is that of Putative septation protein SpoVG from Clostridium acetobutylicum (strain ATCC 824 / DSM 792 / JCM 1419 / IAM 19013 / LMG 5710 / NBRC 13948 / NRRL B-527 / VKM B-1787 / 2291 / W).